We begin with the raw amino-acid sequence, 520 residues long: NAD(P)H-quinone oxidoreductase subunit 2 (520 aa).

14 helical membrane passes run 15–35, 42–62, 79–99, 106–126, 132–152, 167–187, 210–230, 244–264, 280–300, 306–326, 334–354, 378–398, 400–420, and 466–486; these read ILPE…DLIL, WIGY…YFQW, LSII…LMSI, GTAL…GMFV, LVMI…LTGY, LLIG…LYGL, LGAV…ISAA, PTPV…ALAI, FVFT…ALAQ, MLAY…IAGT, IFYL…IILF, LGLS…GFFG, IYLF…LGLV, and VGLV…NPLF.

The protein belongs to the complex I subunit 2 family. As to quaternary structure, NDH-1 can be composed of about 15 different subunits; different subcomplexes with different compositions have been identified which probably have different functions.

It is found in the cellular thylakoid membrane. The enzyme catalyses a plastoquinone + NADH + (n+1) H(+)(in) = a plastoquinol + NAD(+) + n H(+)(out). It catalyses the reaction a plastoquinone + NADPH + (n+1) H(+)(in) = a plastoquinol + NADP(+) + n H(+)(out). In terms of biological role, NDH-1 shuttles electrons from an unknown electron donor, via FMN and iron-sulfur (Fe-S) centers, to quinones in the respiratory and/or the photosynthetic chain. The immediate electron acceptor for the enzyme in this species is believed to be plastoquinone. Couples the redox reaction to proton translocation, and thus conserves the redox energy in a proton gradient. Cyanobacterial NDH-1 also plays a role in inorganic carbon-concentration. The sequence is that of NAD(P)H-quinone oxidoreductase subunit 2 from Nostoc sp. (strain PCC 7120 / SAG 25.82 / UTEX 2576).